The primary structure comprises 276 residues: Undecaprenyl-diphosphatase (276 aa).

Helical transmembrane passes span 40–60 (GLAFDTILHIGTLVAIFTFFW), 98–118 (WLIIVGTIPTGIMGILLKDAI), 121–141 (IFRGTLFVGIFLLVTAAVLYY), 155–175 (MSFKQALIVGICQGLAVFPGI), 200–220 (FLLSIPAVIGAGLIQIKDIAT), 227–247 (VLLAGFISSVIFGYLSIKLLM), and 255–275 (LDIFAYYCTIIGIITIILSVV).

The protein belongs to the UppP family.

The protein resides in the cell membrane. The enzyme catalyses di-trans,octa-cis-undecaprenyl diphosphate + H2O = di-trans,octa-cis-undecaprenyl phosphate + phosphate + H(+). Functionally, catalyzes the dephosphorylation of undecaprenyl diphosphate (UPP). The chain is Undecaprenyl-diphosphatase from Methanosphaera stadtmanae (strain ATCC 43021 / DSM 3091 / JCM 11832 / MCB-3).